The following is a 308-amino-acid chain: Aspartate carbamoyltransferase catalytic subunit (308 aa).

Residues arginine 57 and threonine 58 each contribute to the carbamoyl phosphate site. Residue lysine 86 coordinates L-aspartate. Carbamoyl phosphate is bound by residues arginine 107, histidine 135, and glutamine 138. The L-aspartate site is built by arginine 168 and arginine 229. Carbamoyl phosphate contacts are provided by leucine 268 and proline 269.

Belongs to the aspartate/ornithine carbamoyltransferase superfamily. ATCase family. Heterooligomer of catalytic and regulatory chains.

It carries out the reaction carbamoyl phosphate + L-aspartate = N-carbamoyl-L-aspartate + phosphate + H(+). The protein operates within pyrimidine metabolism; UMP biosynthesis via de novo pathway; (S)-dihydroorotate from bicarbonate: step 2/3. In terms of biological role, catalyzes the condensation of carbamoyl phosphate and aspartate to form carbamoyl aspartate and inorganic phosphate, the committed step in the de novo pyrimidine nucleotide biosynthesis pathway. This is Aspartate carbamoyltransferase catalytic subunit from Thermococcus gammatolerans (strain DSM 15229 / JCM 11827 / EJ3).